Consider the following 304-residue polypeptide: DCN1-like protein 3 (304 aa).

Disordered stretches follow at residues 1-87 (MGQC…EESS) and 285-304 (VEGR…EEQT). Gly2 carries N-myristoyl glycine lipidation. One can recognise a DCUN1 domain in the interval 86-278 (SSLQRLEELF…LFDTFVEWEM (193 aa)).

In terms of assembly, part of a complex containing DCUN1D3, CUL3 and RBX1. Interacts (via the DCUN1 domain) with the unneddylated cullins: interacts with CUL1, CUL2, CUL3, CUL4A, CUL4B and CUL5; these interactions promote the cullin neddylation and the identity of the cullin dictates the affinity of the interaction. Interacts preferentially with CUL3; this interaction triggers the relocalization of CUL3 to the cell membrane where CUL3 is neddylated. Interacts (via DCUN1 domain) with RBX1. May also interact with regulators or subunits of cullin-RING ligases such as RNF7, ELOB and DDB1; these interactions are bridged by cullins. Interacts (via DCUN1 domain) with CAND1; this interaction is bridged by cullins and strongly inhibits cullin neddylation. These CAND-cullin-DCNL complexes can only be neddylated in the presence of a substrate adapter. Interacts (via DCUN1 domain) with the N-terminally acetylated form of UBE2M and UBE2F.

It is found in the cell membrane. It localises to the cytoplasm. The protein localises to the nucleus. The protein resides in the perinuclear region. Its function is as follows. Contributes to the neddylation of all cullins by transferring NEDD8 from N-terminally acetylated NEDD8-conjugating E2s enzyme to different cullin C-terminal domain-RBX complexes and may play a role in the cell cycle progression by regulating the SCF ubiquitin E3 ligase complex, after UV damage. At the cell membrane, can promote and as well inhibit cullins neddylation. This Rattus norvegicus (Rat) protein is DCN1-like protein 3.